A 101-amino-acid polypeptide reads, in one-letter code: Small ribosomal subunit protein uS14 (101 aa).

Belongs to the universal ribosomal protein uS14 family. Part of the 30S ribosomal subunit. Contacts proteins S3 and S10.

In terms of biological role, binds 16S rRNA, required for the assembly of 30S particles and may also be responsible for determining the conformation of the 16S rRNA at the A site. This Shewanella sp. (strain ANA-3) protein is Small ribosomal subunit protein uS14.